Consider the following 1025-residue polypeptide: MKFFALFIYRPVATILLSVAITLCGILGFRMLPVAPLPQVDFPVIMVSASLPGASPETMASSVATPLERSLGRIAGVSEMTSSSSLGSTRIILQFDFDRDINGAARDVQAAINAAQSLLPSGMPSRPTYRKANPSDAPIMILTLTSDTYSQGELYDFASTQLAPTISQIDGVGDVDVGGSSLPAVRVGLNPQALFNQGVSLDDVRTAISNANVRKPQGALEDGTHRWQIQTNDELKTAAEYQPLIIHYNNGGAVRLGDVATVTDSVQDVRNAGMTNAKPAILLMIRKLPEANIIQTVDSIRARLPELQSTIPAAIDLQIAQDRSPTIRASLEEVEQTLIISVALVILVVFLFLRSGRATIIPAVAVPVSLIGTFAAMYLCGFSLNNLSLMALTIATGFVVDDAIVVLENIARHLEAGMKPLQAALQGTREVGFTVLSMSLSLVAVFLPLLLMGGLPGRLLREFAVTLSVAIGISLLVSLTLTPMMCGWMLKASKPREQKRLRGFGRMLVALQQGYGKSLKWVLNHTRLVGVVLLGTIALNIWLYISIPKTFFPEQDTGVLMGGIQADQSISFQAMRGKLQDFMKIIRDDPAVDNVTGFTGGSRVNSGMMFITLKPRGERSETAQQIIDRLRKKLAKEPGANLFLMAVQDIRVGGRQANASYQYTLLSDDLAALREWEPKIRKKLATLPELADVNSDQEDNGAEMNLIYDRDTMARLGIDVQAANSLLNNAFGQRQISTIYQPMNQYKVVMEVDPRYTQDISALEKMFVINNEGKAIPLSYFAKWQPANAPLSVNHQGLSAASTISFNLPTGKSLSDASAAIDRAMTQLGVPSTVRGSFAGTAQVFQETMNSQVILIIAAIATVYIVLGILYESYVHPLTILSTLPSAGVGALLALELFNAPFSLIALIGIMLLIGIVKKNAIMMVDFALEAQRHGNLTPQEAIFQACLLRFRPIMMTTLAALFGALPLVLSGGDGSELRQPLGITIVGGLVMSQLLTLYTTPVVYLFFDRLRLRFSRKPKQAVTE.

A run of 12 helical transmembrane segments spans residues 3 to 23 (FFAL…AITL), 333 to 353 (EVEQ…FLFL), 360 to 380 (IIPA…MYLC), 387 to 407 (LSLM…IVVL), 431 to 451 (VGFT…PLLL), 463 to 483 (FAVT…TLTP), 528 to 548 (LVGV…ISIP), 853 to 873 (VILI…LYES), 875 to 895 (VHPL…LLAL), 897 to 917 (LFNA…IGIV), 953 to 973 (PIMM…LSGG), and 984 to 1004 (ITIV…TPVV).

It belongs to the resistance-nodulation-cell division (RND) (TC 2.A.6) family. MdtC subfamily. Part of a tripartite efflux system composed of MdtA, MdtB and MdtC. MdtC forms a heteromultimer with MdtB.

Its subcellular location is the cell inner membrane. Functionally, the MdtABC tripartite complex confers resistance against novobiocin and deoxycholate. This Escherichia coli O127:H6 (strain E2348/69 / EPEC) protein is Multidrug resistance protein MdtC.